A 29-amino-acid polypeptide reads, in one-letter code: Cytochrome b6-f complex subunit 8 (29 aa).

Residues 3 to 23 form a helical membrane-spanning segment; it reads IVSIAWAALMVVFSFSLSLVV.

Belongs to the PetN family. As to quaternary structure, the 4 large subunits of the cytochrome b6-f complex are cytochrome b6, subunit IV (17 kDa polypeptide, PetD), cytochrome f and the Rieske protein, while the 4 small subunits are PetG, PetL, PetM and PetN. The complex functions as a dimer.

The protein localises to the plastid. It is found in the chloroplast thylakoid membrane. Component of the cytochrome b6-f complex, which mediates electron transfer between photosystem II (PSII) and photosystem I (PSI), cyclic electron flow around PSI, and state transitions. In Phaseolus vulgaris (Kidney bean), this protein is Cytochrome b6-f complex subunit 8.